The following is a 554-amino-acid chain: Arginine--tRNA ligase (554 aa).

Residues 129–139 carry the 'HIGH' region motif; it reads ANPTGPLHIGH.

Belongs to the class-I aminoacyl-tRNA synthetase family. In terms of assembly, monomer.

It is found in the cytoplasm. The catalysed reaction is tRNA(Arg) + L-arginine + ATP = L-arginyl-tRNA(Arg) + AMP + diphosphate. The sequence is that of Arginine--tRNA ligase from Geobacter sp. (strain M21).